A 255-amino-acid polypeptide reads, in one-letter code: Cytosolic Fe-S cluster assembly factor Nubp2 homolog (255 aa).

14 to 21 (GKGGVGKS) lines the ATP pocket. The [4Fe-4S] cluster site is built by Cys-185 and Cys-188.

This sequence belongs to the Mrp/NBP35 ATP-binding proteins family. NUBP2/CFD1 subfamily. Heterotetramer of 2 Nubp1 and 2 Nubp2 chains. Requires [4Fe-4S] cluster as cofactor.

Its subcellular location is the cytoplasm. Functionally, component of the cytosolic iron-sulfur (Fe/S) protein assembly (CIA) machinery. Required for maturation of extramitochondrial Fe-S proteins. The Nubp1-Nubp2 heterotetramer forms a Fe-S scaffold complex, mediating the de novo assembly of an Fe-S cluster and its transfer to target apoproteins. The chain is Cytosolic Fe-S cluster assembly factor Nubp2 homolog from Drosophila persimilis (Fruit fly).